A 1123-amino-acid chain; its full sequence is Inner tegument protein (1123 aa).

Disordered stretches follow at residues 1–27 and 1047–1123; these read MADRGLPSEAPVVTTSPAGPPSDGPMQ and RPLA…TSYQ. An interaction with large tegument protein region spans residues 568–1123; sequence WDITPTTPAT…PTDLPLTSYQ (556 aa).

This sequence belongs to the herpesviridae inner tegument protein family. Interacts (via C-terminus) with the large tegument protein/LTP (via N-terminus). Interacts with host DST. Interacts with host RIGI; this interaction inhibits RIGI activation. Interacts with host CGAS; this interaction inhibits host CGAS activation. Interacts with host TAOK3.

The protein resides in the virion tegument. The protein localises to the host cytoplasm. Its subcellular location is the host nucleus. It is found in the host Golgi apparatus. It localises to the host trans-Golgi network. It catalyses the reaction L-asparaginyl-[protein] + H2O = L-aspartyl-[protein] + NH4(+). The catalysed reaction is L-glutaminyl-[protein] + H2O = L-glutamyl-[protein] + NH4(+). Functionally, plays an essential role in cytoplasmic secondary envelopment during viral egress. Interacts with the capsid via the large tegument protein/LTP and participates in its transport to the host trans-Golgi network (TGN) where secondary envelopment occurs. Modulates tegumentation and capsid accumulation at the viral assembly complex. Plays a role in microtubule-based retrograde axonal transport to promote neuroinvasion. Also plays a role in the inhibition of host immune response by acting as a viral deamidase. Deamidates host RIGI on two asparagines which becomes unable to sense viral dsRNA. In turn, its ability to trigger antiviral immune response and restrict viral replication is inhibited. Also deamidates a critical asparagine on host CGAS which abolishes cGAMP synthesis and downstream innate immune activation. This chain is Inner tegument protein (UL37), found in Homo sapiens (Human).